We begin with the raw amino-acid sequence, 516 residues long: MLRVVSWNINGIRSPLQGLACQEPSSCPTALRRVLDELDADIVCLQETKVTRDVLTEPLAIVEGYNSYFSFSRSRSGYSGVATFCKDSATPVAAEEGLSGVFATLNGDIGCYGNMDEFTQEELRVLDSEGRALLTQHKIRTLEGKEKTLTLINVYCPHADPGKPERLTFKMRFYRLLQMRAEALLAAGSHVIILGDLNTAHRPIDHCDASSLECFEEDPGRKWMDGLLSNPGDEAGPHIGLFMDSYRYLHPKQQRAFTCWSVVSGARHLNYGSRLDYVLGDRALVIDTFQASFLLPEVMGSDHCPVGAVLNVSCVPAKQCPALCTRFLPEFAGTQLKILRFLVPLEQEPVREQQVLQPSHQIQAQRQPRKACMHSTRLRKSQGGPKRKQKNLMSYFQPSSSLSQTSGVELPTLPLVGPLTTPKTAEEVATATVLEEKNKVPESKDEKGERTAFWKSMLSGPSPMPLCGGHREPCVMRTVKKTGPNFGRQFYMCARPRGPPSDPSSRCNFFLWSRPS.

Mg(2+) contacts are provided by Asn8 and Glu47. Tyr155 is an active-site residue. The Mg(2+) site is built by Asp196, Asn198, Asp302, and His303. Asp196 functions as the Proton donor/acceptor in the catalytic mechanism. The Proton acceptor role is filled by His303. The segment covering 357 to 366 (QPSHQIQAQR) has biased composition (polar residues). The tract at residues 357 to 389 (QPSHQIQAQRQPRKACMHSTRLRKSQGGPKRKQ) is disordered. Basic residues predominate over residues 367–389 (QPRKACMHSTRLRKSQGGPKRKQ). Lys370 is covalently cross-linked (Glycyl lysine isopeptide (Lys-Gly) (interchain with G-Cter in ubiquitin)). The segment at 389–396 (QKNLMSYF) is required for the interaction and colocalization with PCNA in nuclear foci in presence of oxidative-induced DNA damaging agents. Cys467, His470, Cys493, and Cys507 together coordinate Zn(2+). The segment at 467 to 516 (CGGHREPCVMRTVKKTGPNFGRQFYMCARPRGPPSDPSSRCNFFLWSRPS) adopts a GRF-type zinc-finger fold.

It belongs to the DNA repair enzymes AP/ExoA family. Interacts with PCNA. This interaction is increased by misincorporation of uracil in nuclear DNA. It depends on Mg(2+) as a cofactor. Requires Mn(2+) as cofactor. Post-translationally, ubiquitinated by the CUL9-RBX1 complex. Ubiquitinated by MKRN3 at Lys-370 leading to proteasomal degradation. In terms of tissue distribution, expressed in lymphocytes, thymocytes and splenocytes (at protein level). Highly expressed in the thymus and weakly expressed in the bone marrow, spleen, eye, kidney, lung, brain and uterus.

It localises to the nucleus. Its subcellular location is the cytoplasm. The protein resides in the mitochondrion. It carries out the reaction Exonucleolytic cleavage in the 3'- to 5'-direction to yield nucleoside 5'-phosphates.. Its activity is regulated as follows. 3'-5' exonuclease activity is activated by sodium and manganese. 3'-5' exonuclease and 3'-phosphodiesterase activities are stimulated in presence of PCNA. In terms of biological role, functions as a weak apurinic/apyrimidinic (AP) endodeoxyribonuclease in the DNA base excision repair (BER) pathway of DNA lesions induced by oxidative and alkylating agents. Initiates repair of AP sites in DNA by catalyzing hydrolytic incision of the phosphodiester backbone immediately adjacent to the damage, generating a single-strand break with 5'-deoxyribose phosphate and 3'-hydroxyl ends. Also displays double-stranded DNA 3'-5' exonuclease, 3'-phosphodiesterase activities. Shows robust 3'-5' exonuclease activity on 3'-recessed heteroduplex DNA and is able to remove mismatched nucleotides preferentially. Shows fairly strong 3'-phosphodiesterase activity involved in the removal of 3'-damaged termini formed in DNA by oxidative agents. In the nucleus functions in the PCNA-dependent BER pathway. Plays a role in reversing blocked 3' DNA ends, problematic lesions that preclude DNA synthesis. Required for somatic hypermutation (SHM) and DNA cleavage step of class switch recombination (CSR) of immunoglobulin genes. Required for proper cell cycle progression during proliferation of peripheral lymphocytes. The chain is DNA-(apurinic or apyrimidinic site) endonuclease 2 (Apex2) from Mus musculus (Mouse).